The chain runs to 280 residues: Undecaprenyl-diphosphatase (280 aa).

8 helical membrane passes run 3–23 (IILL…EFLP), 45–65 (VDLF…YDYW), 88–108 (QLGL…FTFA), 115–135 (LFDP…IFYV), 150–170 (VGLK…IPGT), 191–211 (AEFS…LDLL), 225–245 (VLGI…RLLV), and 255–275 (IFAW…WGFG).

It belongs to the UppP family.

The protein localises to the cell inner membrane. It catalyses the reaction di-trans,octa-cis-undecaprenyl diphosphate + H2O = di-trans,octa-cis-undecaprenyl phosphate + phosphate + H(+). In terms of biological role, catalyzes the dephosphorylation of undecaprenyl diphosphate (UPP). Confers resistance to bacitracin. The sequence is that of Undecaprenyl-diphosphatase from Psychrobacter arcticus (strain DSM 17307 / VKM B-2377 / 273-4).